The chain runs to 58 residues: Ribosome modulation factor (58 aa).

The protein belongs to the ribosome modulation factor family.

It localises to the cytoplasm. Functionally, during stationary phase, converts 70S ribosomes to an inactive dimeric form (100S ribosomes). This Shewanella amazonensis (strain ATCC BAA-1098 / SB2B) protein is Ribosome modulation factor.